The sequence spans 173 residues: Crossover junction endodeoxyribonuclease RuvC (173 aa).

Active-site residues include Asp8, Glu67, and Asp139. Positions 8, 67, and 139 each coordinate Mg(2+).

It belongs to the RuvC family. In terms of assembly, homodimer which binds Holliday junction (HJ) DNA. The HJ becomes 2-fold symmetrical on binding to RuvC with unstacked arms; it has a different conformation from HJ DNA in complex with RuvA. In the full resolvosome a probable DNA-RuvA(4)-RuvB(12)-RuvC(2) complex forms which resolves the HJ. Requires Mg(2+) as cofactor.

The protein localises to the cytoplasm. It carries out the reaction Endonucleolytic cleavage at a junction such as a reciprocal single-stranded crossover between two homologous DNA duplexes (Holliday junction).. Functionally, the RuvA-RuvB-RuvC complex processes Holliday junction (HJ) DNA during genetic recombination and DNA repair. Endonuclease that resolves HJ intermediates. Cleaves cruciform DNA by making single-stranded nicks across the HJ at symmetrical positions within the homologous arms, yielding a 5'-phosphate and a 3'-hydroxyl group; requires a central core of homology in the junction. The consensus cleavage sequence is 5'-(A/T)TT(C/G)-3'. Cleavage occurs on the 3'-side of the TT dinucleotide at the point of strand exchange. HJ branch migration catalyzed by RuvA-RuvB allows RuvC to scan DNA until it finds its consensus sequence, where it cleaves and resolves the cruciform DNA. This chain is Crossover junction endodeoxyribonuclease RuvC, found in Sodalis glossinidius (strain morsitans).